A 373-amino-acid polypeptide reads, in one-letter code: SH3 domain-binding protein 5-like (373 aa).

A disordered region spans residues 1–36 (MEGKEGPPCEVRLPTPGAEREGPVHPELGAFGESAS). 2 coiled-coil regions span residues 35 to 98 (ASDA…ESAR) and 170 to 258 (WQEM…KLRY). 2 disordered regions span residues 274–308 (ARRTQSSVLSQRAPPLGAEAPPSVKDGETGPPADT) and 332–373 (DLTD…SVSL). Positions 332 to 360 (DLTDVTSLDGRETGAVESGGSRERGEDRG) are enriched in basic and acidic residues.

Belongs to the SH3BP5 family.

In terms of biological role, functions as a guanine nucleotide exchange factor (GEF) for rab11a. In Xenopus laevis (African clawed frog), this protein is SH3 domain-binding protein 5-like (sh3bp5l).